We begin with the raw amino-acid sequence, 151 residues long: Ribosomal RNA large subunit methyltransferase H (151 aa).

S-adenosyl-L-methionine-binding positions include L73, G100, and 119–124 (LSDLTM).

This sequence belongs to the RNA methyltransferase RlmH family. Homodimer.

The protein resides in the cytoplasm. It catalyses the reaction pseudouridine(1915) in 23S rRNA + S-adenosyl-L-methionine = N(3)-methylpseudouridine(1915) in 23S rRNA + S-adenosyl-L-homocysteine + H(+). Its function is as follows. Specifically methylates the pseudouridine at position 1915 (m3Psi1915) in 23S rRNA. The polypeptide is Ribosomal RNA large subunit methyltransferase H (Aliarcobacter butzleri (strain RM4018) (Arcobacter butzleri)).